A 465-amino-acid chain; its full sequence is Pancreatic triacylglycerol lipase (465 aa).

An N-terminal signal peptide occupies residues 1-16 (MLLLWALPLLLGAVAG). 2 disulfides stabilise this stretch: Cys-20–Cys-26 and Cys-108–Cys-119. Ser-170 functions as the Nucleophile in the catalytic mechanism. Catalysis depends on Asp-194, which acts as the Charge relay system. Residues Glu-205, Arg-208, Asp-210, and Asp-213 each coordinate Ca(2+). Cys-255 and Cys-279 are oxidised to a cystine. Catalysis depends on His-281, which acts as the Charge relay system. Intrachain disulfides connect Cys-303–Cys-314, Cys-317–Cys-321, and Cys-449–Cys-465. A PLAT domain is found at 355–465 (WRYQVAVTLS…EDILLTLTPC (111 aa)).

This sequence belongs to the AB hydrolase superfamily. Lipase family. As to quaternary structure, forms a 1:1 stoichiometric complex with (pro)colipase/CLPS.

Its subcellular location is the secreted. It carries out the reaction a triacylglycerol + H2O = a diacylglycerol + a fatty acid + H(+). The enzyme catalyses 1,2,3-tributanoylglycerol + H2O = dibutanoylglycerol + butanoate + H(+). It catalyses the reaction 1,2,3-tri-(9Z-octadecenoyl)-glycerol + H2O = di-(9Z)-octadecenoylglycerol + (9Z)-octadecenoate + H(+). The catalysed reaction is all-trans-retinyl hexadecanoate + H2O = all-trans-retinol + hexadecanoate + H(+). It carries out the reaction 1,2-di-(9Z-octadecenoyl)-glycerol + H2O = (9Z-octadecenoyl)-glycerol + (9Z)-octadecenoate + H(+). Inhibited by bile salts, is reactivated by (pro)colipase/CLPS. Plays an important role in fat metabolism. It preferentially splits the esters of long-chain fatty acids at positions 1 and 3, producing mainly 2-monoacylglycerol and free fatty acids, and shows considerably higher activity against insoluble emulsified substrates than against soluble ones. The chain is Pancreatic triacylglycerol lipase (PNLIP) from Oryctolagus cuniculus (Rabbit).